The chain runs to 666 residues: Endogenous retrovirus group K member 6 Gag polyprotein (666 aa).

Glycine 2 carries N-myristoyl glycine lipidation. Positions 165 to 264 are disordered; the sequence is GKGPELVGPS…APPSRQGSKL (100 aa). Residues 232–247 are compositionally biased toward pro residues; it reads GMPPAPQGRAPYPQPP. CCHC-type zinc fingers lie at residues 544 to 561 and 580 to 597; these read RKCY…NCPV and DLCP…QCRS. A disordered region spans residues 598–642; it reads KFDKNGQPLSGNEQRGQPQAPQQTGAFPIQPFVPQGFQGQQPPLS. Positions 604–622 are enriched in polar residues; the sequence is QPLSGNEQRGQPQAPQQTG. A compositionally biased stretch (low complexity) spans 624 to 640; the sequence is FPIQPFVPQGFQGQQPP.

It belongs to the beta type-B retroviral Gag protein family. HERV class-II K(HML-2) gag subfamily. In terms of processing, myristoylation is essential for retroviral assembly. Alteration of the glycine residue leads to a block in the budding of particles and an accumulation of Gag inside the cell. Specific enzymatic cleavages may yield mature proteins.

It is found in the cell membrane. Its function is as follows. The products of the Gag polyproteins of infectious retroviruses perform highly complex orchestrated tasks during the assembly, budding, maturation, and infection stages of the viral replication cycle. During viral assembly, the proteins form membrane associations and self-associations that ultimately result in budding of an immature virion from the infected cell. Gag precursors also function during viral assembly to selectively bind and package two plus strands of genomic RNA. Endogenous Gag proteins may have kept, lost or modified their original function during evolution. This is Endogenous retrovirus group K member 6 Gag polyprotein (ERVK-6) from Homo sapiens (Human).